The primary structure comprises 85 residues: Beta-insect depressant toxin BmKITa (85 aa).

Residues 1–21 (MKLFLLLLISASMLIDGLVNA) form the signal peptide. The region spanning 22–82 (DGYIRGSNGC…TWKSESNTCG (61 aa)) is the LCN-type CS-alpha/beta domain. Disulfide bonds link C31–C81, C35–C56, C42–C63, and C46–C65. G82 carries the post-translational modification Glycine amide.

As to expression, expressed by the venom gland.

The protein localises to the secreted. In terms of biological role, depressant insect beta-toxins cause a transient contraction paralysis followed by a slow flaccid paralysis. They bind voltage-independently at site-4 of sodium channels (Nav) and shift the voltage of activation toward more negative potentials thereby affecting sodium channel activation and promoting spontaneous and repetitive firing. This toxin also displays an evident analgesic effect but is devoid of any toxicity on mice. This chain is Beta-insect depressant toxin BmKITa, found in Olivierus martensii (Manchurian scorpion).